Reading from the N-terminus, the 807-residue chain is AP-5 complex subunit zeta-1 (807 aa).

In terms of assembly, probably part of the adaptor protein complex 5 (AP-5) a tetramer composed of AP5B1, AP5M1, AP5S1 and AP5Z1. Interacts with ZFYVE26 and SPG11.

The protein localises to the cytoplasm. The protein resides in the nucleus. Its function is as follows. As part of AP-5, a probable fifth adaptor protein complex it may be involved in endosomal transport. This is AP-5 complex subunit zeta-1 (Ap5z1) from Mus musculus (Mouse).